A 129-amino-acid chain; its full sequence is MAKAPIRAHKRIKRQIPNCIAHVHASFNNTIVTITDGQGNVLAWATAGGSGFRGSRKSTPFAAQVAAERCAEAVKDYGIKTLEVIVKGPGPGRESTVRAFNASGYRITSITDMTPIPHNGCRPPKRRRV.

Belongs to the universal ribosomal protein uS11 family. Part of the 30S ribosomal subunit. Interacts with proteins S7 and S18. Binds to IF-3.

Its function is as follows. Located on the platform of the 30S subunit, it bridges several disparate RNA helices of the 16S rRNA. Forms part of the Shine-Dalgarno cleft in the 70S ribosome. The protein is Small ribosomal subunit protein uS11 of Hamiltonella defensa subsp. Acyrthosiphon pisum (strain 5AT).